The sequence spans 157 residues: uncharacterized protein (157 aa).

A helical transmembrane segment spans residues 42–64 (SCIRLIVMFICVAMITCPNSLRF).

It localises to the membrane. This is an uncharacterized protein from Saccharomyces cerevisiae (strain ATCC 204508 / S288c) (Baker's yeast).